A 355-amino-acid polypeptide reads, in one-letter code: UDP-3-O-acylglucosamine N-acyltransferase (355 aa).

His252 functions as the Proton acceptor in the catalytic mechanism.

The protein belongs to the transferase hexapeptide repeat family. LpxD subfamily. In terms of assembly, homotrimer.

It carries out the reaction a UDP-3-O-[(3R)-3-hydroxyacyl]-alpha-D-glucosamine + a (3R)-hydroxyacyl-[ACP] = a UDP-2-N,3-O-bis[(3R)-3-hydroxyacyl]-alpha-D-glucosamine + holo-[ACP] + H(+). Its pathway is bacterial outer membrane biogenesis; LPS lipid A biosynthesis. Its function is as follows. Catalyzes the N-acylation of UDP-3-O-acylglucosamine using 3-hydroxyacyl-ACP as the acyl donor. Is involved in the biosynthesis of lipid A, a phosphorylated glycolipid that anchors the lipopolysaccharide to the outer membrane of the cell. This chain is UDP-3-O-acylglucosamine N-acyltransferase, found in Polynucleobacter necessarius subsp. necessarius (strain STIR1).